The sequence spans 324 residues: Adenine deaminase (324 aa).

Zn(2+) is bound by residues histidine 11, histidine 13, and histidine 189. The active-site Proton donor is glutamate 192. Position 270 (aspartate 270) interacts with Zn(2+). Aspartate 271 is a substrate binding site.

Belongs to the metallo-dependent hydrolases superfamily. Adenosine and AMP deaminases family. Adenine deaminase type 2 subfamily. Requires Zn(2+) as cofactor.

It catalyses the reaction adenine + H2O + H(+) = hypoxanthine + NH4(+). Its function is as follows. Catalyzes the hydrolytic deamination of adenine to hypoxanthine. Plays an important role in the purine salvage pathway and in nitrogen catabolism. The sequence is that of Adenine deaminase from Rhizobium meliloti (strain 1021) (Ensifer meliloti).